Reading from the N-terminus, the 350-residue chain is Protein RecA (350 aa).

Gly-67–Thr-74 lines the ATP pocket.

This sequence belongs to the RecA family.

The protein resides in the cytoplasm. Its function is as follows. Can catalyze the hydrolysis of ATP in the presence of single-stranded DNA, the ATP-dependent uptake of single-stranded DNA by duplex DNA, and the ATP-dependent hybridization of homologous single-stranded DNAs. It interacts with LexA causing its activation and leading to its autocatalytic cleavage. The polypeptide is Protein RecA (Baumannia cicadellinicola subsp. Homalodisca coagulata).